The sequence spans 438 residues: 23S rRNA (uracil(1939)-C(5))-methyltransferase RlmD (438 aa).

Positions 10-69 (KASVNTKHLSVDVVRLDHNGAGIAFVDKKPVFIEGALPGEKAIIQFIEQKKQFSRAKLIK) constitute a TRAM domain. [4Fe-4S] cluster is bound by residues cysteine 82, cysteine 88, cysteine 91, and cysteine 169. Residues glutamine 272, phenylalanine 301, asparagine 306, glutamate 322, asparagine 349, and aspartate 370 each contribute to the S-adenosyl-L-methionine site. The Nucleophile role is filled by cysteine 396.

This sequence belongs to the class I-like SAM-binding methyltransferase superfamily. RNA M5U methyltransferase family. RlmD subfamily.

It carries out the reaction uridine(1939) in 23S rRNA + S-adenosyl-L-methionine = 5-methyluridine(1939) in 23S rRNA + S-adenosyl-L-homocysteine + H(+). Functionally, catalyzes the formation of 5-methyl-uridine at position 1939 (m5U1939) in 23S rRNA. This is 23S rRNA (uracil(1939)-C(5))-methyltransferase RlmD from Aliivibrio fischeri (strain MJ11) (Vibrio fischeri).